A 504-amino-acid chain; its full sequence is Sodium-coupled neutral amino acid transporter 3 (504 aa).

Ser52 is modified (phosphoserine; by PKC). N-linked (GlcNAc...) asparagine glycosylation occurs at Asn73. 5 consecutive transmembrane segments (helical) span residues 82–102 (GILGLAYAMANTGIILFLFLL), 105–125 (VALLSSYSIHLLLKSSGIVGI), 143–163 (AAALAITLQNIGAMSSYLYII), 186–206 (MDGNYLVILVSVIIILPLALM), and 212–232 (LGYSSGFSLSCMVFFLIAVIY). A disulfide bridge connects residues Cys239 and Cys275. Residues Asn247 and Asn251 are each glycosylated (N-linked (GlcNAc...) asparagine). The helical transmembrane segment at 287–307 (AYTIPIMAFAFVCHPEVLPIY) threads the bilayer. N-linked (GlcNAc...) asparagine glycosylation occurs at Asn323. Transmembrane regions (helical) follow at residues 324–344 (LSIAVMYVMYFLAALFGYLTF), 366–386 (ILCVRVAVLIAVTLTVPIVLF), 408–428 (VLIATGLLTCINLLVIFAPNI), 431–451 (IFGIIGATSAPCLIFIFPAIF), and 469–489 (ILALCFAAVGFLLMTMSLSFI).

This sequence belongs to the amino acid/polyamine transporter 2 family. Phosphorylation at Ser-52 induces internalization and sequestration into an intracellular reservoir. During dephosphorylation by protein phosphatases, can recycle back to the plasma membrane and regain activity. Prolonged phosphorylation results in its degradation. In terms of tissue distribution, highly expressed in liver. Expressed in skeletal muscle. Expressed in kidney, heart and brain. Not detected in gut, lung or spleen. Expressed ubiquitously in hepatocytes in liver whereas in kidney expression is restricted to the medulla. Within brain, expressed in glial cells. In the cerebellum, expressed on Bergmann glial fibers in the molecular layer and astrocytes in the granule layer. Expressed in brain kidney and liver (at protein level). In the adult kidney, highly expressed in the outer strip of the outer medulla and medullary rays penetrating into the kidney cortex (at protein level).

It localises to the cell membrane. It is found in the basolateral cell membrane. It carries out the reaction L-glutamine(out) + Na(+)(out) + H(+)(in) = L-glutamine(in) + Na(+)(in) + H(+)(out). It catalyses the reaction L-asparagine(out) + Na(+)(out) + H(+)(in) = L-asparagine(in) + Na(+)(in) + H(+)(out). The enzyme catalyses L-histidine(out) + Na(+)(out) + H(+)(in) = L-histidine(in) + Na(+)(in) + H(+)(out). Its activity is regulated as follows. L-glutamine efflux and L-glutamine uptake are regulated by CO2/HCO3(-) through SLC4A4 leading to modulation of cytosolic pH and Na(+)concentration. In terms of biological role, symporter that cotransports specific neutral amino acids and sodium ions, coupled to an H(+) antiporter activity. Mainly participates in the glutamate-GABA-glutamine cycle in brain where it transports L-glutamine from astrocytes in the intercellular space for the replenishment of both neurotransmitters glutamate and gamma-aminobutyric acid (GABA) in neurons. Also functions as the major influx transporter in ganglion cells mediating the uptake of glutamine. The transport activity is specific for L-glutamine, L-histidine and L-asparagine. The transport is electroneutral coupled to the cotransport of 1 Na(+) and the antiport of 1 H(+), pH dependent, saturable, Li(+) tolerant and functions in both direction depending on the concentration gradients of its substrates and cotransported ions. Also mediates an amino acid-gated H(+) conductance that is not stoichiometrically coupled to the amino acid transport but which influences the ionic gradients that drive the amino acid transport. In addition, may play a role in nitrogen metabolism, amino acid homeostasis, glucose metabolism and renal ammoniagenesis. The polypeptide is Sodium-coupled neutral amino acid transporter 3 (Rattus norvegicus (Rat)).